The following is a 407-amino-acid chain: Argininosuccinate synthase (407 aa).

Residues 16-24 (AYSGGLDTS) and Ala-44 contribute to the ATP site. Residues Tyr-96 and Ser-101 each coordinate L-citrulline. Position 126 (Gly-126) interacts with ATP. Positions 128, 132, and 133 each coordinate L-aspartate. Residue Asn-132 participates in L-citrulline binding. Residues Arg-136, Ser-185, Ser-194, Glu-270, and Tyr-282 each coordinate L-citrulline.

This sequence belongs to the argininosuccinate synthase family. Type 1 subfamily. As to quaternary structure, homotetramer.

The protein localises to the cytoplasm. It carries out the reaction L-citrulline + L-aspartate + ATP = 2-(N(omega)-L-arginino)succinate + AMP + diphosphate + H(+). The protein operates within amino-acid biosynthesis; L-arginine biosynthesis; L-arginine from L-ornithine and carbamoyl phosphate: step 2/3. The protein is Argininosuccinate synthase of Shewanella putrefaciens (strain CN-32 / ATCC BAA-453).